A 194-amino-acid chain; its full sequence is Peptidyl-tRNA hydrolase (194 aa).

A tRNA-binding site is contributed by Tyr17. The active-site Proton acceptor is His22. Residues Tyr68, Asn70, and Asn116 each coordinate tRNA.

Belongs to the PTH family. As to quaternary structure, monomer.

It is found in the cytoplasm. It carries out the reaction an N-acyl-L-alpha-aminoacyl-tRNA + H2O = an N-acyl-L-amino acid + a tRNA + H(+). Functionally, hydrolyzes ribosome-free peptidyl-tRNAs (with 1 or more amino acids incorporated), which drop off the ribosome during protein synthesis, or as a result of ribosome stalling. In terms of biological role, catalyzes the release of premature peptidyl moieties from peptidyl-tRNA molecules trapped in stalled 50S ribosomal subunits, and thus maintains levels of free tRNAs and 50S ribosomes. This is Peptidyl-tRNA hydrolase from Chromohalobacter salexigens (strain ATCC BAA-138 / DSM 3043 / CIP 106854 / NCIMB 13768 / 1H11).